The following is a 288-amino-acid chain: ATP synthase gamma chain (288 aa).

Belongs to the ATPase gamma chain family. In terms of assembly, F-type ATPases have 2 components, CF(1) - the catalytic core - and CF(0) - the membrane proton channel. CF(1) has five subunits: alpha(3), beta(3), gamma(1), delta(1), epsilon(1). CF(0) has three main subunits: a, b and c.

Its subcellular location is the cell inner membrane. Functionally, produces ATP from ADP in the presence of a proton gradient across the membrane. The gamma chain is believed to be important in regulating ATPase activity and the flow of protons through the CF(0) complex. This Polaromonas naphthalenivorans (strain CJ2) protein is ATP synthase gamma chain.